We begin with the raw amino-acid sequence, 134 residues long: Profilin-3 (134 aa).

A disulfide bond links Cys13 and Cys118. Residues 84–100 (AVIRGKKGSGGITIKKT) carry the Involved in PIP2 interaction motif. The residue at position 114 (Thr114) is a Phosphothreonine.

The protein belongs to the profilin family. As to quaternary structure, occurs in many kinds of cells as a complex with monomeric actin in a 1:1 ratio. In terms of processing, phosphorylated by MAP kinases.

The protein resides in the cytoplasm. The protein localises to the cytoskeleton. In terms of biological role, binds to actin and affects the structure of the cytoskeleton. At high concentrations, profilin prevents the polymerization of actin, whereas it enhances it at low concentrations. The polypeptide is Profilin-3 (Olea europaea (Common olive)).